A 365-amino-acid chain; its full sequence is MDFLKVSDKTTIPYRSDSLFSLNQQQYKESSFGFRDMEIHPHPTPYAGNGLLGCYYYYPFTNAQLKELERQAMIYKYMIASIPVPFDLLVSSPSSASPCNNKNIAGDLEPGRCRRTDGKKWRCAKEVVSNHKYCEKHLHRGRPRSRKHVEPPYSRPNNNGGSVKNRDLKKLPQKLSSSSIKDKTLEPMEVSSSISNYRDSRGSEKFTVLATTEQENKYLNFIDVWSDGVRSSEKQSTTSTPVSSSNGNLSLYSLDLSMGGNNLMGQDEMGLIQMGLGVIGSGSEDHHGYGPYGVTSSLEEMSSWLAPMSTTPGGPLAEILRPSTNLAISGDIESYSLMETPTPSSSPSRVMKKMTSSVSDESSQV.

The 36-residue stretch at 59 to 94 (PFTNAQLKELERQAMIYKYMIASIPVPFDLLVSSPS) folds into the QLQ domain. The 45-residue stretch at 107-151 (DLEPGRCRRTDGKKWRCAKEVVSNHKYCEKHLHRGRPRSRKHVEP) folds into the WRC domain. 2 short sequence motifs (bipartite nuclear localization signal) span residues 112–122 (RCRRTDGKKWR) and 140–147 (RGRPRSRK). Residues 137–147 (HLHRGRPRSRK) are compositionally biased toward basic residues. Disordered stretches follow at residues 137-187 (HLHR…TLEP) and 332-365 (IESY…SSQV). The segment covering 337–365 (LMETPTPSSSPSRVMKKMTSSVSDESSQV) has biased composition (polar residues).

The protein belongs to the GRF family.

It localises to the nucleus. In terms of biological role, transcription activator that plays a role in the regulation of cell expansion in leaf and cotyledons tissues. Component of a network formed by miR396, the GRFs and their interacting factors (GIFs) acting in the regulation of meristem function, at least partially through the control of cell proliferation. The sequence is that of Growth-regulating factor 7 (GRF7) from Arabidopsis thaliana (Mouse-ear cress).